Reading from the N-terminus, the 345-residue chain is Neurotrimin (345 aa).

The signal sequence occupies residues 1–30 (MGVCGSLFLPWKCLVVVSLRLLFLVPTGVP). Ig-like C2-type domains are found at residues 39 to 126 (PKAM…PKTS), 136 to 218 (PKIV…VKVT), and 222 to 309 (PPYI…ASIT). Residues N44, N70, and N152 are each glycosylated (N-linked (GlcNAc...) asparagine). C57 and C115 are joined by a disulfide. 2 disulfides stabilise this stretch: C157–C201 and C243–C295. N-linked (GlcNAc...) asparagine glycans are attached at residues N284, N292, N305, and N321. N321 carries the GPI-anchor amidated asparagine lipid modification. A propeptide spans 322 to 345 (GTSSRRAGCLWLLPLLVLHLLLKF) (removed in mature form).

The protein belongs to the immunoglobulin superfamily. IgLON family.

Its subcellular location is the cell membrane. In terms of biological role, neural cell adhesion molecule. This is Neurotrimin (NTM) from Bos taurus (Bovine).